A 31-amino-acid polypeptide reads, in one-letter code: U1-theraphotoxin-Cv1a (31 aa).

Cystine bridges form between Cys-2/Cys-16, Cys-9/Cys-21, and Cys-15/Cys-28.

As to expression, expressed by the venom gland.

It localises to the secreted. Functionally, insecticidal toxin that induces reversible paralysis in crickets but not in cockroaches and mice. Molecular target unknown. The sequence is that of U1-theraphotoxin-Cv1a from Coremiocnemis valida (Singapore tarantula).